The primary structure comprises 248 residues: Carbohydrate deacetylase (248 aa).

The Mg(2+) site is built by His59 and His121.

It belongs to the YdjC deacetylase family. Mg(2+) is required as a cofactor.

Functionally, probably catalyzes the deacetylation of acetylated carbohydrates an important step in the degradation of oligosaccharides. In Brevibacillus brevis (strain 47 / JCM 6285 / NBRC 100599), this protein is Carbohydrate deacetylase.